A 547-amino-acid chain; its full sequence is Chaperonin GroEL (547 aa).

Residues 30–33, Lys-51, 87–91, Gly-415, and Asp-496 each bind ATP; these read TLGP and DGTTT.

It belongs to the chaperonin (HSP60) family. In terms of assembly, forms a cylinder of 14 subunits composed of two heptameric rings stacked back-to-back. Interacts with the co-chaperonin GroES.

It localises to the cytoplasm. The catalysed reaction is ATP + H2O + a folded polypeptide = ADP + phosphate + an unfolded polypeptide.. Together with its co-chaperonin GroES, plays an essential role in assisting protein folding. The GroEL-GroES system forms a nano-cage that allows encapsulation of the non-native substrate proteins and provides a physical environment optimized to promote and accelerate protein folding. This chain is Chaperonin GroEL, found in Haemophilus ducreyi (strain 35000HP / ATCC 700724).